Consider the following 99-residue polypeptide: MMSLKLLLLVMLLLGASLQVTHAARATNVGRECCLEYFKGAIPLRRLTGWYRTSGECSKDAIVFVTIHGKSICSDPKDTRVKKTVRYLQSIMNPVPQES.

The signal sequence occupies residues 1–23 (MMSLKLLLLVMLLLGASLQVTHA). Disulfide bonds link Cys-33–Cys-57 and Cys-34–Cys-73.

This sequence belongs to the intercrine beta (chemokine CC) family. Expressed in thymus and also in spleen, lung, lymph node, kidney, small intestine, colon and skin.

It is found in the secreted. Functionally, chemokine, which displays chemotactic activity for T lymphocytes, preferentially Th2 cells, but not monocytes or granulocytes. Therefore plays an important role in a wide range of inflammatory and immunological processes. Acts by binding to CCR4 at T-cell surface. Mediates GM-CSF/CSF2-driven pain and inflammation. In the brain, required to maintain the typical, highly branched morphology of hippocampal microglia under homeostatic conditions. May be important for the appropriate adaptation of microglial morphology and synaptic plasticity to acute lipopolysaccharide (LPS)-induced neuroinflammation. Plays a role in wound healing, mainly by inducing fibroblast migration into the wound. The polypeptide is C-C motif chemokine 17 (CCL17) (Felis catus (Cat)).